A 121-amino-acid polypeptide reads, in one-letter code: MPILPKYESFWAFLLIACLIPVLAISVSNLVAPSTSKNPEKSTTYESGIEPMGESWIQFQIRYYMFALVFVIFDVETVFLYPWAMSFDDLGIIAFAEVLVFVIILIIGLIYAWRKGALEWS.

3 helical membrane-spanning segments follow: residues 10 to 30, 65 to 85, and 90 to 110; these read FWAFLLIACLIPVLAISVSNL, MFALVFVIFDVETVFLYPWAM, and LGIIAFAEVLVFVIILIIGLI.

The protein belongs to the complex I subunit 3 family. NDH is composed of at least 16 different subunits, 5 of which are encoded in the nucleus.

Its subcellular location is the plastid. It localises to the chloroplast thylakoid membrane. The catalysed reaction is a plastoquinone + NADH + (n+1) H(+)(in) = a plastoquinol + NAD(+) + n H(+)(out). It catalyses the reaction a plastoquinone + NADPH + (n+1) H(+)(in) = a plastoquinol + NADP(+) + n H(+)(out). Its function is as follows. NDH shuttles electrons from NAD(P)H:plastoquinone, via FMN and iron-sulfur (Fe-S) centers, to quinones in the photosynthetic chain and possibly in a chloroplast respiratory chain. The immediate electron acceptor for the enzyme in this species is believed to be plastoquinone. Couples the redox reaction to proton translocation, and thus conserves the redox energy in a proton gradient. In Staurastrum punctulatum (Green alga), this protein is NAD(P)H-quinone oxidoreductase subunit 3, chloroplastic.